We begin with the raw amino-acid sequence, 116 residues long: T cell receptor alpha variable 38-1 (116 aa).

A signal peptide spans M1–A21. Residues Q22–K116 enclose the Ig-like domain. Cysteines 43 and 112 form a disulfide. N78 carries N-linked (GlcNAc...) asparagine glycosylation.

In terms of assembly, alpha-beta TR is a heterodimer composed of an alpha and beta chain; disulfide-linked. The alpha-beta TR is associated with the transmembrane signaling CD3 coreceptor proteins to form the TR-CD3 (TcR or TCR). The assembly of alpha-beta TR heterodimers with CD3 occurs in the endoplasmic reticulum where a single alpha-beta TR heterodimer associates with one CD3D-CD3E heterodimer, one CD3G-CD3E heterodimer and one CD247 homodimer forming a stable octameric structure. CD3D-CD3E and CD3G-CD3E heterodimers preferentially associate with TR alpha and TR beta chains, respectively. The association of the CD247 homodimer is the last step of TcR assembly in the endoplasmic reticulum and is required for transport to the cell surface.

The protein resides in the cell membrane. In terms of biological role, v region of the variable domain of T cell receptor (TR) alpha chain that participates in the antigen recognition. Alpha-beta T cell receptors are antigen specific receptors which are essential to the immune response and are present on the cell surface of T lymphocytes. Recognize peptide-major histocompatibility (MH) (pMH) complexes that are displayed by antigen presenting cells (APC), a prerequisite for efficient T cell adaptive immunity against pathogens. Binding of alpha-beta TR to pMH complex initiates TR-CD3 clustering on the cell surface and intracellular activation of LCK that phosphorylates the ITAM motifs of CD3G, CD3D, CD3E and CD247 enabling the recruitment of ZAP70. In turn ZAP70 phosphorylates LAT, which recruits numerous signaling molecules to form the LAT signalosome. The LAT signalosome propagates signal branching to three major signaling pathways, the calcium, the mitogen-activated protein kinase (MAPK) kinase and the nuclear factor NF-kappa-B (NF-kB) pathways, leading to the mobilization of transcription factors that are critical for gene expression and essential for T cell growth and differentiation. The T cell repertoire is generated in the thymus, by V-(D)-J rearrangement. This repertoire is then shaped by intrathymic selection events to generate a peripheral T cell pool of self-MH restricted, non-autoaggressive T cells. Post-thymic interaction of alpha-beta TR with the pMH complexes shapes TR structural and functional avidity. The chain is T cell receptor alpha variable 38-1 from Homo sapiens (Human).